The chain runs to 214 residues: Large ribosomal subunit protein uL1 (214 aa).

It belongs to the universal ribosomal protein uL1 family. As to quaternary structure, component of the large ribosomal subunit.

It localises to the cytoplasm. Functionally, component of the large ribosomal subunit. The ribosome is a large ribonucleoprotein complex responsible for the synthesis of proteins in the cell. This Entamoeba histolytica (strain ATCC 30459 / HM-1:IMSS / ABRM) protein is Large ribosomal subunit protein uL1 (RPL10A).